Reading from the N-terminus, the 480-residue chain is Proline--tRNA ligase (480 aa).

The protein belongs to the class-II aminoacyl-tRNA synthetase family. ProS type 3 subfamily. Homodimer.

Its subcellular location is the cytoplasm. It carries out the reaction tRNA(Pro) + L-proline + ATP = L-prolyl-tRNA(Pro) + AMP + diphosphate. In terms of biological role, catalyzes the attachment of proline to tRNA(Pro) in a two-step reaction: proline is first activated by ATP to form Pro-AMP and then transferred to the acceptor end of tRNA(Pro). The polypeptide is Proline--tRNA ligase (Mycobacterium leprae (strain Br4923)).